The primary structure comprises 263 residues: Hydroxyethylthiazole kinase 1 (263 aa).

M42 contacts substrate. ATP contacts are provided by K118 and T164. G191 provides a ligand contact to substrate.

It belongs to the Thz kinase family. The cofactor is Mg(2+).

It carries out the reaction 5-(2-hydroxyethyl)-4-methylthiazole + ATP = 4-methyl-5-(2-phosphooxyethyl)-thiazole + ADP + H(+). It participates in cofactor biosynthesis; thiamine diphosphate biosynthesis; 4-methyl-5-(2-phosphoethyl)-thiazole from 5-(2-hydroxyethyl)-4-methylthiazole: step 1/1. Functionally, catalyzes the phosphorylation of the hydroxyl group of 4-methyl-5-beta-hydroxyethylthiazole (THZ). The sequence is that of Hydroxyethylthiazole kinase 1 from Clostridium botulinum (strain Okra / Type B1).